The primary structure comprises 339 residues: mRNA cap guanine-N(7) methyltransferase 2 (339 aa).

Positions methionine 1–proline 277 constitute an mRNA cap 0 methyltransferase domain. Residues lysine 14, aspartate 54, and aspartate 82–proline 83 each bind S-adenosyl-L-methionine. A disordered region spans residues valine 314 to leucine 339.

Belongs to the class I-like SAM-binding methyltransferase superfamily. mRNA cap 0 methyltransferase family.

It is found in the nucleus. The catalysed reaction is a 5'-end (5'-triphosphoguanosine)-ribonucleoside in mRNA + S-adenosyl-L-methionine = a 5'-end (N(7)-methyl 5'-triphosphoguanosine)-ribonucleoside in mRNA + S-adenosyl-L-homocysteine. MRNA-capping methyltransferase that methylates the N7 position of the added guanosine to the 5'-cap structure of mRNAs. Binds RNA containing 5'-terminal GpppC. The polypeptide is mRNA cap guanine-N(7) methyltransferase 2 (Oryza sativa subsp. japonica (Rice)).